Reading from the N-terminus, the 927-residue chain is Phosphoenolpyruvate carboxylase (927 aa).

Catalysis depends on residues His160 and Lys589.

The protein belongs to the PEPCase type 1 family. The cofactor is Mg(2+).

The catalysed reaction is oxaloacetate + phosphate = phosphoenolpyruvate + hydrogencarbonate. Functionally, forms oxaloacetate, a four-carbon dicarboxylic acid source for the tricarboxylic acid cycle. The protein is Phosphoenolpyruvate carboxylase of Rhodopseudomonas palustris (strain BisA53).